The following is a 336-amino-acid chain: Ferrochelatase (336 aa).

Fe cation-binding residues include His-206 and Glu-287.

This sequence belongs to the ferrochelatase family.

The protein localises to the cytoplasm. The catalysed reaction is heme b + 2 H(+) = protoporphyrin IX + Fe(2+). It functions in the pathway porphyrin-containing compound metabolism; protoheme biosynthesis; protoheme from protoporphyrin-IX: step 1/1. Catalyzes the ferrous insertion into protoporphyrin IX. The polypeptide is Ferrochelatase (Neisseria gonorrhoeae (strain ATCC 700825 / FA 1090)).